A 146-amino-acid chain; its full sequence is Large ribosomal subunit protein uL13 (146 aa).

Belongs to the universal ribosomal protein uL13 family. As to quaternary structure, part of the 50S ribosomal subunit.

Functionally, this protein is one of the early assembly proteins of the 50S ribosomal subunit, although it is not seen to bind rRNA by itself. It is important during the early stages of 50S assembly. This chain is Large ribosomal subunit protein uL13, found in Malacoplasma penetrans (strain HF-2) (Mycoplasma penetrans).